Here is a 425-residue protein sequence, read N- to C-terminus: Glucose-6-phosphate 1-dehydrogenase (425 aa).

NADP(+) contacts are provided by arginine 44 and lysine 135. Residues histidine 165, lysine 169, glutamate 201, and aspartate 220 each coordinate substrate. The active-site Proton acceptor is the histidine 225. Lysine 311 contacts substrate.

Belongs to the glucose-6-phosphate dehydrogenase family.

The enzyme catalyses D-glucose 6-phosphate + NADP(+) = 6-phospho-D-glucono-1,5-lactone + NADPH + H(+). The protein operates within carbohydrate degradation; pentose phosphate pathway; D-ribulose 5-phosphate from D-glucose 6-phosphate (oxidative stage): step 1/3. In terms of biological role, catalyzes the oxidation of glucose 6-phosphate to 6-phosphogluconolactone. The polypeptide is Glucose-6-phosphate 1-dehydrogenase (Helicobacter pylori (strain ATCC 700392 / 26695) (Campylobacter pylori)).